A 197-amino-acid chain; its full sequence is Imidazoleglycerol-phosphate dehydratase (197 aa).

This sequence belongs to the imidazoleglycerol-phosphate dehydratase family.

The protein localises to the cytoplasm. The enzyme catalyses D-erythro-1-(imidazol-4-yl)glycerol 3-phosphate = 3-(imidazol-4-yl)-2-oxopropyl phosphate + H2O. The protein operates within amino-acid biosynthesis; L-histidine biosynthesis; L-histidine from 5-phospho-alpha-D-ribose 1-diphosphate: step 6/9. The polypeptide is Imidazoleglycerol-phosphate dehydratase (Pseudomonas fluorescens (strain SBW25)).